The following is a 1378-amino-acid chain: MAQSFLGQKRLRKYYGKIREVLDMPNLIEVQKSSYDLFLNSGEAEVPTDGEGIAGVFQSVFPIKDFNETSVLEYVKYELEKPKYDVEECQQRDMTYSAPLKVTLRLIVFDVDEDTGAKSVKDIKEQDVFMGDMPLMTPNGTFVVNGTERVIVSQMHRSPGVFFDHDKGKTHSSGKLLFACRIIPYRGSWLDFEFDAKDIVFARIDRRRKLPVTTLLYSLGLDQEAIMDAYYDTITYKLEKNKGWVAPFFPDRVRGTRPTYDLVDAASGEVLFERGKKVTPRAVKKLIDEGKVTELLLPYEHIAGKFVAKDIINEETGAIYVEAGDELTLEYDKDGTLIGGTAKELVDAGITEIPVLDIDNVNVGPYMRNTMAQDKNMNRDTALMDIYRVMRPGEPPTVEAASALFDTLFFDAERYDLSAVGRVKMNMRLALDAEDTQRTLRREDIVACIKALVDLRDGRGDIDDIDHLGNRRVRSVGELMENQYRVGLLRMERAIKERMSSVEIDTVMPQDLINAKPAAAAVREFFGSSQLSQFMDQTNPLSEVTHKRRLSALGPGGLTRERAGFEVRDVHPTHYGRMCPIETPEGPNIGLINSLATFARVNKYGFIETPYRKVENRMVTDEVQYMSATEEMRHTVAQANAQLDEDGRFKNDLVSTRQSGDYTLAPSENVDLIDVSPKQLVSVAASLIPFLENDDANRALMGSNMQRQAVPLLQAEAPLVGTGIEEVVARDSGAAIMAKRAGIIDQVDAQRIVIRATSDLELGDAGVDIYRMRKFQRSNQNTCINQRPLVKVGDTVLKGQVIADGPSTDMGELALGKNVVVAFMPWNGYNYEDSILISERIARDDVFTSIHIEEFEVAARDTKLGPEEITRDIPNVGEEALRNLDEAGIVYIGADVEPGDILVGKITPKGESPMTPEEKLLRAIFGEKASDVRDTSLRVKPGDFGTVVEVRVFNRHGVEKDERALQIEREEVERLARDRDDEMAILDRNIYARLKSTILGKVAVKGPKGVSANAEITEDLLQMLPRVQWWQLALKDEGDAQVVEALNEQYEIQKRTLDARFEDKVEKVRRGDDLPPGVMKMVKVFVAVKRKLQPGDKMAGRHGNKGVISKVVPMEDMPFLADGTPVDFCLNPLGVPSRMNVGQILETHMGWAARGLGLNVDEALQEYRRSGDLTPVRDALSHAYGENVYDEGIAGMDEETLIEAAGNVTRGVPIATPVFDGAKEGDVNDALVRAGFSESGQSILFDGRTGEQFARPVTVGVKYLLKLHHLVDDKIHARSTGPYSLVTQQPLGGKAQFGGQRFGEMEVWALEAYGAAYTLQEMLTVKSDDVAGRTKVYESIVKGEDNFEAGVPESFNVLVKEVRGLGLNMELLDAEEDE.

The protein belongs to the RNA polymerase beta chain family. In terms of assembly, the RNAP catalytic core consists of 2 alpha, 1 beta, 1 beta' and 1 omega subunit. When a sigma factor is associated with the core the holoenzyme is formed, which can initiate transcription.

The enzyme catalyses RNA(n) + a ribonucleoside 5'-triphosphate = RNA(n+1) + diphosphate. DNA-dependent RNA polymerase catalyzes the transcription of DNA into RNA using the four ribonucleoside triphosphates as substrates. This is DNA-directed RNA polymerase subunit beta from Roseobacter denitrificans (strain ATCC 33942 / OCh 114) (Erythrobacter sp. (strain OCh 114)).